A 400-amino-acid chain; its full sequence is Subtilisin-like protease 11 (400 aa).

Positions 1-19 (MGLFKVIFTAVAALSAVDA) are cleaved as a signal peptide. A propeptide spanning residues 20 to 117 (AELLSSAKSK…VEHDRHVYIS (98 aa)) is cleaved from the precursor. One can recognise an Inhibitor I9 domain in the interval 35–116 (SYLVVMKDSV…FVEHDRHVYI (82 aa)). The 274-residue stretch at 127–400 (SWGLGRVSHR…NKLLYNGSGK (274 aa)) folds into the Peptidase S8 domain. Residue N138 is glycosylated (N-linked (GlcNAc...) asparagine). D159 functions as the Charge relay system in the catalytic mechanism. N181 carries an N-linked (GlcNAc...) asparagine glycan. H191 functions as the Charge relay system in the catalytic mechanism. N252 and N337 each carry an N-linked (GlcNAc...) asparagine glycan. S346 (charge relay system) is an active-site residue. Residues N388 and N396 are each glycosylated (N-linked (GlcNAc...) asparagine).

Belongs to the peptidase S8 family.

It localises to the secreted. In terms of biological role, secreted subtilisin-like serine protease with keratinolytic activity that contributes to pathogenicity. The chain is Subtilisin-like protease 11 (SUB11) from Arthroderma benhamiae (strain ATCC MYA-4681 / CBS 112371) (Trichophyton mentagrophytes).